Consider the following 482-residue polypeptide: Tripartite motif-containing protein 10 (482 aa).

An RING-type zinc finger spans residues 16–61 (CPICQGTLREPVTIDCGHNFCCVCLTRYLEIPCLDPGELPTCPLCK). The segment at 95–136 (EEEDVCLEHREKVYYFCEDDEMQLCVVCREAWEHRHHTVRFL) adopts a B box-type zinc-finger fold. Residues C100, H103, C122, and H128 each contribute to the Zn(2+) site. The B30.2/SPRY domain occupies 293–482 (REMKTFLEKL…GRGSKFSLSS (190 aa)).

It belongs to the TRIM/RBCC family. In terms of assembly, interacts with IFNAR1; this interaction prevents association of IFNAR1 with TYK2.

It localises to the cytoplasm. Its function is as follows. E3 ligase that plays an essential role in the differentiation and survival of terminal erythroid cells. May directly bind to PTEN and promote its ubiquitination, resulting in its proteasomal degradation and activation of hypertrophic signaling. In addition, plays a role in immune response regulation by repressing the phosphorylation of STAT1 and STAT2 in the interferon/JAK/STAT signaling pathway independent of its E3 ligase activity. Mechanistically, interacts with the intracellular domain of IFNAR1 and thereby inhibits the association of TYK2 and IFNAR1. The chain is Tripartite motif-containing protein 10 (TRIM10) from Sus scrofa (Pig).